A 171-amino-acid polypeptide reads, in one-letter code: MTTASSFEKDELLKCGHGEMFGAGNAQLPVGNMLMMDRITHISTEGGVYGKGEIIAELDINPDLWFFECHFPGDPVMPGCLGLDAMWQLVGFFLGWKGNKGRGRALGSGEVKFTGQILPTAKKVTFHINLKRVIERKLVMGIADGSVKVDGREIYTAKDLRVGLFTSTDNF.

His-70 is a catalytic residue.

Belongs to the thioester dehydratase family. FabA subfamily. Homodimer.

The protein resides in the cytoplasm. It catalyses the reaction a (3R)-hydroxyacyl-[ACP] = a (2E)-enoyl-[ACP] + H2O. The enzyme catalyses (3R)-hydroxydecanoyl-[ACP] = (2E)-decenoyl-[ACP] + H2O. The catalysed reaction is (2E)-decenoyl-[ACP] = (3Z)-decenoyl-[ACP]. It functions in the pathway lipid metabolism; fatty acid biosynthesis. Functionally, necessary for the introduction of cis unsaturation into fatty acids. Catalyzes the dehydration of (3R)-3-hydroxydecanoyl-ACP to E-(2)-decenoyl-ACP and then its isomerization to Z-(3)-decenoyl-ACP. Can catalyze the dehydratase reaction for beta-hydroxyacyl-ACPs with saturated chain lengths up to 16:0, being most active on intermediate chain length. In Marinomonas sp. (strain MWYL1), this protein is 3-hydroxydecanoyl-[acyl-carrier-protein] dehydratase.